We begin with the raw amino-acid sequence, 232 residues long: Cytidylate kinase (232 aa).

ATP is bound at residue 11–19; the sequence is GPAGAGKST.

It belongs to the cytidylate kinase family. Type 1 subfamily.

The protein localises to the cytoplasm. It catalyses the reaction CMP + ATP = CDP + ADP. It carries out the reaction dCMP + ATP = dCDP + ADP. The polypeptide is Cytidylate kinase (Desulfitobacterium hafniense (strain Y51)).